A 241-amino-acid chain; its full sequence is Peroxisomal membrane protein 11C (241 aa).

Topologically, residues 1-122 (MALLNRLASA…ADAKVLRVDS (122 aa)) are cytoplasmic. The chain crosses the membrane as a helical span at residues 123–149 (AWWWTLNTALWTLSLLLGAVKALWTML). Residues 150–211 (KLRQKLRSPT…GVLWAGRFPP (62 aa)) are Lumenal-facing. Residues 212–227 (WLVGLMGTISSILSTC) form a helical membrane-spanning segment. Topologically, residues 228–241 (QAVRAGRQAEADSP) are cytoplasmic.

The protein belongs to the peroxin-11 family. Homodimer. Heterodimer with either PEX11A or PEX11B. Interacts with FIS1. Expressed in liver and at much lower levels in heart, kidney and testis.

The protein localises to the peroxisome membrane. Its function is as follows. Promotes membrane protrusion and elongation on the peroxisomal surface. The sequence is that of Peroxisomal membrane protein 11C (Pex11g) from Mus musculus (Mouse).